Here is a 435-residue protein sequence, read N- to C-terminus: 3-phosphoshikimate 1-carboxyvinyltransferase (435 aa).

The 3-phosphoshikimate site is built by K22, S23, and R27. K22 lines the phosphoenolpyruvate pocket. Phosphoenolpyruvate is bound by residues G94 and R122. S166, Q168, D314, and K341 together coordinate 3-phosphoshikimate. Phosphoenolpyruvate is bound at residue Q168. D314 functions as the Proton acceptor in the catalytic mechanism. Phosphoenolpyruvate is bound by residues R345 and R388.

It belongs to the EPSP synthase family. Monomer.

It localises to the cytoplasm. The catalysed reaction is 3-phosphoshikimate + phosphoenolpyruvate = 5-O-(1-carboxyvinyl)-3-phosphoshikimate + phosphate. It participates in metabolic intermediate biosynthesis; chorismate biosynthesis; chorismate from D-erythrose 4-phosphate and phosphoenolpyruvate: step 6/7. In terms of biological role, catalyzes the transfer of the enolpyruvyl moiety of phosphoenolpyruvate (PEP) to the 5-hydroxyl of shikimate-3-phosphate (S3P) to produce enolpyruvyl shikimate-3-phosphate and inorganic phosphate. This chain is 3-phosphoshikimate 1-carboxyvinyltransferase, found in Ruthia magnifica subsp. Calyptogena magnifica.